The following is a 215-amino-acid chain: 3-demethoxyubiquinol 3-hydroxylase (215 aa).

Fe cation is bound by residues Glu64, Glu94, His97, Glu146, Glu178, and His181.

The protein belongs to the COQ7 family. Requires Fe cation as cofactor.

It is found in the cell membrane. It carries out the reaction a 5-methoxy-2-methyl-3-(all-trans-polyprenyl)benzene-1,4-diol + AH2 + O2 = a 3-demethylubiquinol + A + H2O. The protein operates within cofactor biosynthesis; ubiquinone biosynthesis. Its function is as follows. Catalyzes the hydroxylation of 2-nonaprenyl-3-methyl-6-methoxy-1,4-benzoquinol during ubiquinone biosynthesis. The protein is 3-demethoxyubiquinol 3-hydroxylase of Pseudomonas fluorescens (strain ATCC BAA-477 / NRRL B-23932 / Pf-5).